A 311-amino-acid chain; its full sequence is Vomeronasal type-1 receptor 105 (311 aa).

Residues 1–17 (MMNKNSRLYTDSNIRNT) are Extracellular-facing. The helical transmembrane segment at 18–38 (FFAEIGIGVSANSLLLLFNIF) threads the bilayer. Over 39 to 50 (KLICGQRSRLTD) the chain is Cytoplasmic. Residues 51-71 (LPIGLLSLINLLMLLMTAFIA) form a helical membrane-spanning segment. Residues 72–94 (TDTFISWRGWDDIICKSLLYLYR) are Extracellular-facing. A disulfide bridge connects residues Cys-86 and Cys-173. Residues 95–115 (TFRGLSLCTSCLLSVLQAIIL) form a helical membrane-spanning segment. Over 116 to 135 (SPRSSCLAKFKHKPSHHISC) the chain is Cytoplasmic. Residues 136–156 (AILSLSVLYMFISSHLLVSII) form a helical membrane-spanning segment. The Extracellular portion of the chain corresponds to 157 to 188 (ATPNLTTNDFIHVTQWCSILPMSYLMQSMFST). Asn-160 carries an N-linked (GlcNAc...) asparagine glycan. Residues 189 to 209 (LLAIRDVFLISLMVLSTWYMV) form a helical membrane-spanning segment. The Cytoplasmic segment spans residues 210-239 (ALLCRHRKQTRHLQGTSLSPKASPEQRATR). The chain crosses the membrane as a helical span at residues 240 to 260 (SILMLMSLFVLMSVFDSIVCS). At 261-271 (SRTMYLNDPIS) the chain is on the extracellular side. A helical membrane pass occupies residues 272–292 (YSYQLFMVHIYATVSPFVFIV). The Cytoplasmic portion of the chain corresponds to 293–311 (TEKHIVNSLRSMCVKVMNV).

The protein belongs to the G-protein coupled receptor 1 family. As to expression, expressed in 1-4% of neurons of the vomeronasal organ. Only one pheromone receptor gene may be expressed in a particular neuron. Not expressed in the main olfactory epithelium.

The protein resides in the cell membrane. Functionally, putative pheromone receptor implicated in the regulation of social as well as reproductive behavior. The protein is Vomeronasal type-1 receptor 105 (Vom1r105) of Rattus norvegicus (Rat).